The following is a 240-amino-acid chain: CRISPR-associated protein Cas5 3 (240 aa).

The protein belongs to the CRISPR-associated protein Cas5 family. Subtype I-A/Apern subfamily. As to quaternary structure, part of the aCascade ribonucleoprotein complex.

Its function is as follows. CRISPR (clustered regularly interspaced short palindromic repeat) is an adaptive immune system that provides protection against mobile genetic elements (viruses, transposable elements and conjugative plasmids). CRISPR clusters contain spacers, sequences complementary to antecedent mobile elements, and target invading nucleic acids. CRISPR clusters are transcribed and processed into CRISPR RNA (crRNA). This is CRISPR-associated protein Cas5 3 (cas5c) from Saccharolobus solfataricus (strain ATCC 35092 / DSM 1617 / JCM 11322 / P2) (Sulfolobus solfataricus).